The chain runs to 189 residues: 3-hydroxyanthranilate 3,4-dioxygenase (189 aa).

Arg-49 contacts O2. 3 residues coordinate Fe cation: His-53, Glu-59, and His-97. Glu-59 contributes to the substrate binding site. Residues Arg-101 and Glu-112 each contribute to the substrate site. Positions 127, 130, 165, and 168 each coordinate Fe cation.

Belongs to the 3-HAO family. In terms of assembly, homodimer. The cofactor is Fe(2+).

It carries out the reaction 3-hydroxyanthranilate + O2 = (2Z,4Z)-2-amino-3-carboxymuconate 6-semialdehyde. Its pathway is cofactor biosynthesis; NAD(+) biosynthesis; quinolinate from L-kynurenine: step 3/3. Functionally, catalyzes the oxidative ring opening of 3-hydroxyanthranilate to 2-amino-3-carboxymuconate semialdehyde, which spontaneously cyclizes to quinolinate. This chain is 3-hydroxyanthranilate 3,4-dioxygenase, found in Cupriavidus pinatubonensis (strain JMP 134 / LMG 1197) (Cupriavidus necator (strain JMP 134)).